Reading from the N-terminus, the 311-residue chain is Ribonuclease HIII (311 aa).

An RNase H type-2 domain is found at 95–311; sequence MSIVGSDEVG…NTEKALRLLR (217 aa). Residues D101, E102, and D206 each contribute to the a divalent metal cation site.

Belongs to the RNase HII family. RnhC subfamily. The cofactor is Mn(2+). Requires Mg(2+) as cofactor.

It is found in the cytoplasm. The catalysed reaction is Endonucleolytic cleavage to 5'-phosphomonoester.. In terms of biological role, endonuclease that specifically degrades the RNA of RNA-DNA hybrids. This Bacillus cereus (strain ATCC 14579 / DSM 31 / CCUG 7414 / JCM 2152 / NBRC 15305 / NCIMB 9373 / NCTC 2599 / NRRL B-3711) protein is Ribonuclease HIII.